The following is a 585-amino-acid chain: SLAIN motif-containing protein-like (585 aa).

5 disordered regions span residues 1-34, 55-125, 324-365, 402-476, and 492-585; these read MVVPDSGSDIQPADNGDTDKVMSNSEPELDPNLT, NQTL…RVEE, QDYA…EDEC, PRLS…SDGQ, and GSMS…DGCY. Residues 68-83 show a composition bias toward polar residues; it reads GGTNNSNLKAGSNINN. Over residues 327–345 the composition is skewed to low complexity; that stretch reads ASTSASRRSSSASLQSLRR. Residues 351–365 are compositionally biased toward acidic residues; sequence QEFDSYSQEDEEDEC. Composition is skewed to polar residues over residues 425-434, 441-476, and 549-563; these read PNLTPRTSLR, NSRSMEANLQSSGNRTSCLPHSPKGASSSRMRSDGQ, and ASPSSRTRLPQTPRS. Basic and acidic residues predominate over residues 575-585; that stretch reads LTDESWKDGCY.

This sequence belongs to the SLAIN motif-containing family.

The chain is SLAIN motif-containing protein-like from Danio rerio (Zebrafish).